The chain runs to 686 residues: MLLRGVLLALQALQLAGALDLPAGSCAFEESTCGFDSVLASLPWILNEEGHYIYVDTSFGKQGEKAVLLSPDLQAEEWSCLRLVYQITTSSESLSDPSQLNLYMRFEDESFDRLLWSAKEPSDSWLIASLDLQNSSKKFKILIEGVLGQGNTASIALFEIKMTTGYCIECDFEENHLCGFVNRWNPNVNWFVGGGSIRNVHSILPQDHTFKSELGHYMYVDSVYVKHFQEVAQLISPLTTAPMAGCLSFYYQIQQGNDNVFSLYTRDVAGLYEEIWKADRPGNAAWNLAEVEFSAPYPMEVIFEVAFNGPKGGYVALDDISFSPVHCQNQTELLFSAVEASCNFEQDLCNFYQDKEGPGWTRVKVKPNMYRAGDHTTGLGYYLLANTKFTSQPGYIGRLYGPSLPGNLQYCLRFHYAIYGFLKMSDTLAVYIFEENHVVQEKIWSVLESPRGVWMQAEITFKKPMPTKVVFMSLCKSFWDCGLVALDDITIQLGSCSSSEKLPPPPGECTFEQDECTFTQEKRNRSSWHRRRGETPTSYTGPKGDHTTGVGYYMYIEASHMVYGQKARLLSRPLRGVSGKHCLTFFYHMYGGGTGLLSVYLKKEEDSEESLLWRRRGEQSISWLRALIEYSCERQHQIIFEAIRGVSIRSDIAIDDVKFQAGPCGEMEDTTQQSSGYSEDLNEIEY.

The signal sequence occupies residues 1-18; that stretch reads MLLRGVLLALQALQLAGA. MAM domains follow at residues 24-169, 168-329, 340-498, and 507-666; these read GSCA…YCIE, IECD…HCQN, ASCN…SCSS, and GECT…PCGE. Asn134 and Asn329 each carry an N-linked (GlcNAc...) asparagine glycan. 2 disordered regions span residues 521–543 and 665–686; these read EKRNRSSWHRRRGETPTSYTGPK and GEMEDTTQQSSGYSEDLNEIEY. The N-linked (GlcNAc...) asparagine glycan is linked to Asn524.

O-glycosylated.

The protein localises to the secreted. It localises to the extracellular space. The protein resides in the extracellular matrix. The polypeptide is MAM domain-containing protein 2 (MAMDC2) (Homo sapiens (Human)).